The following is a 218-amino-acid chain: Pyridoxine/pyridoxamine 5'-phosphate oxidase (218 aa).

Residues 14 to 17 (RREY) and Lys72 each bind substrate. Residues 67-72 (RIVLLK), 82-83 (YT), Arg88, Lys89, and Gln111 each bind FMN. Tyr129, Arg133, and Ser137 together coordinate substrate. Residues 146-147 (QS) and Trp191 contribute to the FMN site. Residue 197–199 (RLH) participates in substrate binding. Arg201 serves as a coordination point for FMN.

This sequence belongs to the pyridoxamine 5'-phosphate oxidase family. As to quaternary structure, homodimer. The cofactor is FMN.

The catalysed reaction is pyridoxamine 5'-phosphate + O2 + H2O = pyridoxal 5'-phosphate + H2O2 + NH4(+). It carries out the reaction pyridoxine 5'-phosphate + O2 = pyridoxal 5'-phosphate + H2O2. It functions in the pathway cofactor metabolism; pyridoxal 5'-phosphate salvage; pyridoxal 5'-phosphate from pyridoxamine 5'-phosphate: step 1/1. The protein operates within cofactor metabolism; pyridoxal 5'-phosphate salvage; pyridoxal 5'-phosphate from pyridoxine 5'-phosphate: step 1/1. Its function is as follows. Catalyzes the oxidation of either pyridoxine 5'-phosphate (PNP) or pyridoxamine 5'-phosphate (PMP) into pyridoxal 5'-phosphate (PLP). This chain is Pyridoxine/pyridoxamine 5'-phosphate oxidase, found in Escherichia coli O139:H28 (strain E24377A / ETEC).